We begin with the raw amino-acid sequence, 726 residues long: WD repeat and coiled-coil-containing protein (726 aa).

2 WD repeats span residues 55–98 (GQFE…SDKN) and 154–194 (KSSG…LNAC). Residues 502-574 (RSYDGDQSPT…PNFIQPSDVS (73 aa)) form a disordered region. A compositionally biased stretch (polar residues) spans 506 to 515 (GDQSPTSSAN). Residues 517 to 533 (FDEKRNRLRMESFDTEP) are compositionally biased toward basic and acidic residues. A compositionally biased stretch (polar residues) spans 550–574 (SGSTSPKSECQNSSPPNFIQPSDVS). The stretch at 581 to 609 (SISRNVERLCCNFAHLQQHLSELTDITRN) forms a coiled coil.

This is WD repeat and coiled-coil-containing protein (wdcp) from Xenopus laevis (African clawed frog).